Here is an 809-residue protein sequence, read N- to C-terminus: BTB/POZ domain-containing protein At2g30600 (809 aa).

BTB domains lie at 211–273 (SDTV…QILE) and 351–420 (SDIK…NMED). Residues 466-537 (VVSSISSCKL…LMWCMKAEES (72 aa)) enclose the BACK domain.

It participates in protein modification; protein ubiquitination. May act as a substrate-specific adapter of an E3 ubiquitin-protein ligase complex (CUL3-RBX1-BTB) which mediates the ubiquitination and subsequent proteasomal degradation of target proteins. This is BTB/POZ domain-containing protein At2g30600 from Arabidopsis thaliana (Mouse-ear cress).